The primary structure comprises 101 residues: Ascorbate-specific PTS system EIIB component (101 aa).

The region spanning 3-96 (VRILAVCGNG…KLLEVIKEHF (94 aa)) is the PTS EIIB type-2 domain. C9 serves as the catalytic Phosphocysteine intermediate. C9 is subject to Phosphocysteine.

The protein resides in the cytoplasm. It catalyses the reaction N(pros)-phospho-L-histidyl-[protein] + L-ascorbate(out) = L-ascorbate 6-phosphate(in) + L-histidyl-[protein]. In terms of biological role, the phosphoenolpyruvate-dependent sugar phosphotransferase system (sugar PTS), a major carbohydrate active transport system, catalyzes the phosphorylation of incoming sugar substrates concomitantly with their translocation across the cell membrane. The enzyme II UlaABC PTS system is involved in ascorbate transport. The protein is Ascorbate-specific PTS system EIIB component (ulaB) of Salmonella choleraesuis (strain SC-B67).